Reading from the N-terminus, the 1166-residue chain is Calcium-activated potassium channel subunit alpha-1 (1166 aa).

Residues 1 to 15 (MANGGGGGGGGGGGS) show a composition bias toward gly residues. Disordered regions lie at residues 1-20 (MANG…LRMS) and 30-51 (LDAS…SVHE). The Extracellular portion of the chain corresponds to 1 to 74 (MANGGGGGGG…VPCDSRGQRM (74 aa)). Residues 33 to 48 (SSSSSSSSSSSSSSSS) are compositionally biased toward low complexity. Residues 75–95 (WWAFLASSMVTFFGGLFIILL) traverse the membrane as a helical segment. The Cytoplasmic portion of the chain corresponds to 96 to 166 (WRTLKYLWTV…MISAQTLTGR (71 aa)). S-palmitoyl cysteine attachment occurs at residues Cys-106, Cys-107, and Cys-109. A Phosphothreonine; by CamK2 modification is found at Thr-139. The helical transmembrane segment at 167–187 (VLVVLVFALSIGALVIYFIDS) threads the bilayer. The Extracellular portion of the chain corresponds to 188 to 202 (SNPIESCQNFYKDFT). The helical transmembrane segment at 203–223 (LQIDMAFNVFFLLYFGLRFIA) threads the bilayer. The Cytoplasmic segment spans residues 224 to 227 (ANDK). A helical transmembrane segment spans residues 228-248 (LWFWLEVNSVVDFFTVPPVFV). Residues 249 to 252 (SVYL) are Extracellular-facing. The helical; Voltage-sensor transmembrane segment at 253–273 (NRSWLGLRFLRALRLIQFSEI) threads the bilayer. The Cytoplasmic portion of the chain corresponds to 274–288 (LQFLNILKTSNSIKL). Residues 289–309 (VNLLSIFISTWLTAAGFIHLV) form a helical membrane-spanning segment. Residues 310–323 (ENSGDPWENFQNNQ) lie on the Extracellular side of the membrane. Residues 324-346 (ALTYWECVYLLMVTMSTVGYGDV) constitute an intramembrane region (pore-forming). Residues 340-343 (TVGY) carry the Selectivity for potassium motif. The Extracellular portion of the chain corresponds to 347-355 (YAKTTLGRL). A helical transmembrane segment spans residues 356–376 (FMVFFILGGLAMFASYVPEII). Over 377–1166 (ELIGNRKKYG…KQKYVQEERL (790 aa)) the chain is Cytoplasmic. An RCK N-terminal 1 domain is found at 395–537 (RKHIVVCGHI…WNWKEGDDAI (143 aa)). 3 residues coordinate Mg(2+): Glu-427, Gln-450, and Glu-452. The interval 544-564 (LGFIAQSCLAQGLSTMLANLF) is segment S7. The interval 601 to 621 (LSFPTVCELCFVKLKLLMIAI) is segment S8. Residues 665–669 (CKACH) form a heme-binding motif region. The tract at residues 689-717 (EQPSTLSPKKKQRNGGMRNSPSSSPKLMR) is disordered. Thr-693 is subject to Phosphothreonine. Ser-695, Ser-708, and Ser-712 each carry phosphoserine. The tract at residues 767 to 787 (VLSGHVVVCIFGDVSSALIGL) is segment S9. The RCK N-terminal 2 domain maps to 769–913 (SGHVVVCIFG…MDRSSPDNSP (145 aa)). Thr-900 bears the Phosphothreonine mark. Phosphoserine is present on residues Ser-908 and Ser-912. Positions 933 to 955 (TELVNDTNVQFLDQDDDDDPDTE) match the Calcium bowl motif. Ca(2+) contacts are provided by Gln-942, Asp-945, Asp-948, and Asp-950. Positions 962 to 982 (FACGTAFAVSVLDSLMSATYF) are segment S10. The span at 1116-1141 (RASLSHSSHSSQSSSKKSSSVHSIPS) shows a compositional bias: low complexity. Residues 1116–1166 (RASLSHSSHSSQSSSKKSSSVHSIPSTANRQNRPKSRESRDKQKYVQEERL) are disordered. A compositionally biased stretch (basic and acidic residues) spans 1150 to 1166 (KSRESRDKQKYVQEERL). A phosphoserine; by PKG mark is found at Ser-1151 and Ser-1154.

This sequence belongs to the potassium channel family. Calcium-activated (TC 1.A.1.3) subfamily. KCa1.1/KCNMA1 sub-subfamily. As to quaternary structure, homotetramer; which constitutes the calcium-activated potassium channel. Interacts with beta subunits KCNMB1, KCNMB2, KCNMB3 and KCNMB4. Interacts with gamma subunits LRRC26, LRRC38, LRRC52 and LRRC55. Beta and gamma subunits are accessory, and modulate its activity. Interacts with RAB11B. Phosphorylated. Stimulated by PKG, but not by PKA. In smooth muscles, phosphorylation affects its activity. Post-translationally, phosphorylated. Exclusively stimulated by PKA. In smooth muscles, phosphorylation affects its activity. In terms of processing, incremental phosphorylation of Thr-139 of the KCNMA1 tetramer changes the response to ethanol from increased activation to inhibition of channel activity. Palmitoylation by ZDHHC22 and ZDHHC23 within the intracellular linker between the S0 and S1 transmembrane domains regulates localization to the plasma membrane. Depalmitoylated by LYPLA1 and LYPLAL1, leading to retard exit from the trans-Golgi network.

Its subcellular location is the cell membrane. The enzyme catalyses K(+)(in) = K(+)(out). Ethanol and carbon monoxide-bound heme increase channel activation. Heme inhibits channel activation. Phosphorylation of Thr-139 leads to inhibition of channel activity by ethanol. Its function is as follows. Potassium channel activated by both membrane depolarization or increase in cytosolic Ca(2+) that mediates export of K(+). It is also activated by concentration of cytosolic Mg(2+). Its activation dampens the excitatory events that elevate the cytosolic Ca(2+) concentration and/or depolarize the cell membrane. It therefore contributes to repolarization of the membrane potential. Plays a key role in controlling excitability in a number of systems, such as regulation of the contraction of smooth muscle, the tuning of hair cells in the cochlea, regulation of transmitter release, and innate immunity. In smooth muscles, its activation by high level of Ca(2+), caused by ryanodine receptors in the sarcoplasmic reticulum, regulates the membrane potential. In cochlea cells, its number and kinetic properties partly determine the characteristic frequency of each hair cell and thereby helps to establish a tonotopic map. Kinetics of KCNMA1 channels are determined by alternative splicing, phosphorylation status and its combination with modulating beta subunits. Highly sensitive to both iberiotoxin (IbTx) and charybdotoxin (CTX). The chain is Calcium-activated potassium channel subunit alpha-1 (KCNMA1) from Bos taurus (Bovine).